Here is a 222-residue protein sequence, read N- to C-terminus: Pyridoxal phosphate homeostasis protein (222 aa).

N6-(pyridoxal phosphate)lysine is present on Lys35.

Belongs to the pyridoxal phosphate-binding protein YggS/PROSC family.

Functionally, pyridoxal 5'-phosphate (PLP)-binding protein, which is involved in PLP homeostasis. This Helicobacter pylori (strain J99 / ATCC 700824) (Campylobacter pylori J99) protein is Pyridoxal phosphate homeostasis protein.